A 200-amino-acid polypeptide reads, in one-letter code: Molybdenum cofactor guanylyltransferase (200 aa).

GTP-binding positions include 10–12, Lys-23, Asn-51, Asp-69, and Asp-99; that span reads LAG. Asp-99 is a binding site for Mg(2+).

The protein belongs to the MobA family. As to quaternary structure, monomer. Mg(2+) serves as cofactor.

The protein localises to the cytoplasm. The enzyme catalyses Mo-molybdopterin + GTP + H(+) = Mo-molybdopterin guanine dinucleotide + diphosphate. Transfers a GMP moiety from GTP to Mo-molybdopterin (Mo-MPT) cofactor (Moco or molybdenum cofactor) to form Mo-molybdopterin guanine dinucleotide (Mo-MGD) cofactor. This Shewanella halifaxensis (strain HAW-EB4) protein is Molybdenum cofactor guanylyltransferase.